We begin with the raw amino-acid sequence, 364 residues long: Phenylalanine dehydrogenase (364 aa).

Arg62 provides a ligand contact to NAD(+). Lys86 is an L-phenylalanine binding site. The active-site Proton donor/acceptor is the Lys98. NAD(+) is bound by residues Asp133, Ser164, Thr168, 255–256 (AM), and 276–278 (AAN). Asn278 serves as a coordination point for L-phenylalanine.

Belongs to the Glu/Leu/Phe/Val dehydrogenases family.

It catalyses the reaction L-phenylalanine + NAD(+) + H2O = 3-phenylpyruvate + NH4(+) + NADH + H(+). The protein operates within amino-acid biosynthesis; L-phenylalanine biosynthesis; L-phenylalanine from phenylpyruvate (PDH route): step 1/1. Catalyzes the reversible NAD(+)-dependent oxidative deamination of L-phenylalanine to phenylpyruvate. The chain is Phenylalanine dehydrogenase from Rhodococcus jostii (strain RHA1).